Reading from the N-terminus, the 1370-residue chain is Major capsid protein (1370 aa).

The protein belongs to the herpesviridae major capsid protein family. As to quaternary structure, homomultimer. Makes the hexons and eleven out of twelve pentons. Interacts with triplex proteins 1/TRX1 and 2/TRX2; adjacent capsomers are linked together in groups of three by triplexes, heterotrimeric complexes composed of one molecule of TRX1 and two molecules of TRX2. Interacts with scaffold protein; this interaction allows efficient MCP transport to the host nucleus. Interacts with capsid vertex component 2/CVC2. Interacts with the small capsomere-interacting protein/SCP.

The protein localises to the virion. It localises to the host nucleus. Self-assembles to form an icosahedral capsid with a T=16 symmetry, about 200 nm in diameter, and consisting of 150 hexons and 12 pentons (total of 162 capsomers). Hexons form the edges and faces of the capsid and are each composed of six MCP molecules. In contrast, one penton is found at each of the 12 vertices. Eleven of the pentons are MCP pentamers, while the last vertex is occupied by the portal complex. The capsid is surrounded by a layer of proteinaceous material designated the tegument which, in turn, is enclosed in an envelope of host cell-derived lipids containing virus-encoded glycoproteins. The protein is Major capsid protein of Human cytomegalovirus (strain AD169) (HHV-5).